Here is a 94-residue protein sequence, read N- to C-terminus: Small ribosomal subunit protein uS19 (94 aa).

Belongs to the universal ribosomal protein uS19 family.

Its function is as follows. Protein S19 forms a complex with S13 that binds strongly to the 16S ribosomal RNA. The protein is Small ribosomal subunit protein uS19 of Nitrosomonas eutropha (strain DSM 101675 / C91 / Nm57).